Consider the following 222-residue polypeptide: Probable transaldolase (222 aa).

Lys83 acts as the Schiff-base intermediate with substrate in catalysis.

Belongs to the transaldolase family. Type 3B subfamily.

The protein resides in the cytoplasm. It catalyses the reaction D-sedoheptulose 7-phosphate + D-glyceraldehyde 3-phosphate = D-erythrose 4-phosphate + beta-D-fructose 6-phosphate. It functions in the pathway carbohydrate degradation; pentose phosphate pathway; D-glyceraldehyde 3-phosphate and beta-D-fructose 6-phosphate from D-ribose 5-phosphate and D-xylulose 5-phosphate (non-oxidative stage): step 2/3. Its function is as follows. Transaldolase is important for the balance of metabolites in the pentose-phosphate pathway. The chain is Probable transaldolase from Nitrosopumilus maritimus (strain SCM1).